Here is a 156-residue protein sequence, read N- to C-terminus: Small ribosomal subunit protein uS7 (156 aa).

Belongs to the universal ribosomal protein uS7 family. As to quaternary structure, part of the 30S ribosomal subunit. Contacts proteins S9 and S11.

In terms of biological role, one of the primary rRNA binding proteins, it binds directly to 16S rRNA where it nucleates assembly of the head domain of the 30S subunit. Is located at the subunit interface close to the decoding center, probably blocks exit of the E-site tRNA. This chain is Small ribosomal subunit protein uS7, found in Thermomicrobium roseum (strain ATCC 27502 / DSM 5159 / P-2).